We begin with the raw amino-acid sequence, 194 residues long: uncharacterized protein (194 aa).

An N-terminal signal peptide occupies residues 1-22 (MNKVTKTAIAGLLALFAGNAAA). A disulfide bridge links Cys38 with Cys78.

It belongs to the fimbrial protein family.

It is found in the fimbrium. Functionally, part of the yraHIJK fimbrial operon. Could contribute to adhesion to various surfaces in specific environmental niches. Increases adhesion to eukaryotic T24 bladder epithelial cells in the absence of fim operon. This is an uncharacterized protein from Escherichia coli (strain K12).